Here is a 652-residue protein sequence, read N- to C-terminus: Nitrate reductase-like protein NarX (652 aa).

Residues M1–S251 form a nitrate reductase alpha subunit region. The 65-residue stretch at D53–T117 folds into the 4Fe-4S Mo/W bis-MGD-type domain. Residues H60, C64, C68, and C103 each contribute to the [4Fe-4S] cluster site. D233 lines the Mo-bis(molybdopterin guanine dinucleotide) pocket. The segment at V258–D415 is nitrate reductase delta subunit. The next 5 membrane-spanning stretches (helical) occupy residues M416–G436, P466–P486, A504–Y524, L545–V565, and A595–F615. The nitrate reductase gamma subunit stretch occupies residues M416–W652. Heme b contacts are provided by H469 and H479. Residues H602 and H620 each contribute to the heme b site.

It in the N-terminal section; belongs to the nitrate reductase alpha subunit family. In the central section; belongs to the NarJ/NarW family. The protein in the C-terminal section; belongs to the nitrate reductase gamma subunit family. The cofactor is [4Fe-4S] cluster. Requires Mo-bis(molybdopterin guanine dinucleotide) as cofactor. It depends on heme b as a cofactor.

The protein resides in the cell membrane. In terms of biological role, does not seem to have nitrate reductase activity. This Mycobacterium tuberculosis (strain CDC 1551 / Oshkosh) protein is Nitrate reductase-like protein NarX (narX).